The primary structure comprises 130 residues: 3-aminoacrylate deaminase RutC (130 aa).

Belongs to the RutC family.

The catalysed reaction is (Z)-3-aminoacrylate + H2O + H(+) = 3-oxopropanoate + NH4(+). Involved in pyrimidine catabolism. Catalyzes the deamination of 3-aminoacrylate to malonic semialdehyde, a reaction that can also occur spontaneously. RutC may facilitate the reaction and modulate the metabolic fitness, rather than catalyzing essential functions. This Klebsiella pneumoniae (strain 342) protein is 3-aminoacrylate deaminase RutC.